Here is a 733-residue protein sequence, read N- to C-terminus: Probable Rho-GTPase-activating protein 6 (733 aa).

Over residues 116–125 the composition is skewed to polar residues; it reads VFNESKSSSP. The tract at residues 116-135 is disordered; that stretch reads VFNESKSSSPPDAHTDKYFT. T141 carries the post-translational modification Phosphothreonine. The segment at 174–256 is disordered; that stretch reads RFDKPSNNGP…SKGSWSSILR (83 aa). Positions 179–195 are enriched in low complexity; the sequence is SNNGPLGRSSLNLSSLS. Polar residues-rich tracts occupy residues 196-218 and 225-240; these read HELQTSQDSPSLSATNQLSSSDT and PPSSFGSQRQFNASQD. The Rho-GAP domain occupies 312 to 546; it reads TNLCKFTFPT…GLIIHWPEVL (235 aa). The interval 692 to 713 is disordered; the sequence is PVTVTASSETNKKSQKINKKAS. The segment covering 704-713 has biased composition (basic residues); the sequence is KSQKINKKAS.

The chain is Probable Rho-GTPase-activating protein 6 (rga6) from Schizosaccharomyces pombe (strain 972 / ATCC 24843) (Fission yeast).